A 142-amino-acid chain; its full sequence is 3-hydroxyacyl-[acyl-carrier-protein] dehydratase FabZ (142 aa).

His50 is an active-site residue.

The protein belongs to the thioester dehydratase family. FabZ subfamily.

The protein resides in the cytoplasm. It carries out the reaction a (3R)-hydroxyacyl-[ACP] = a (2E)-enoyl-[ACP] + H2O. Involved in unsaturated fatty acids biosynthesis. Catalyzes the dehydration of short chain beta-hydroxyacyl-ACPs and long chain saturated and unsaturated beta-hydroxyacyl-ACPs. In Clostridium tetani (strain Massachusetts / E88), this protein is 3-hydroxyacyl-[acyl-carrier-protein] dehydratase FabZ.